Consider the following 560-residue polypeptide: Protein tweety homolog 3 (560 aa).

The Extracellular segment spans residues 1 to 43 (MAAVVNYSPPWWVNLFHRLPHFNLQFQQTSSDFRPDDSDYQKA). A helical transmembrane segment spans residues 44–64 (VLLLGAAALVCLALDLLFLLF). At 65–87 (YSFWLCCCRRKNHDSPNADCCCT) the chain is on the cytoplasmic side. Residues 88–108 (AWCVIIATLVCSAGIAVGFYG) traverse the membrane as a helical segment. Topologically, residues 109–212 (NGETCDGVTR…TEQYDWYRWL (104 aa)) are extracellular. 2 residues coordinate Ca(2+): Glu111 and Asp114. Asn127 and Asn145 each carry an N-linked (GlcNAc...) asparagine glycan. Residues 213 to 233 (GYLGLLLFDVIICLLVLVGLI) traverse the membrane as a helical segment. The Cytoplasmic segment spans residues 234 to 238 (RNSRS). A helical membrane pass occupies residues 239-259 (ILIGVCFLGVLTLVISWASLG). Topologically, residues 260–387 (LEFSFAVGAS…LTGLCYDGVE (128 aa)) are extracellular. 2 disulfide bridges follow: Cys272–Cys382 and Cys300–Cys367. Asn352 carries N-linked (GlcNAc...) asparagine glycosylation. The chain crosses the membrane as a helical span at residues 388-408 (GLIYLVLFSFVTALMFSSIVC). Topologically, residues 409–560 (SVPHTWQSKR…AIHRPHSAIH (152 aa)) are cytoplasmic. Disordered regions lie at residues 415–435 (QSKR…GSRA) and 486–560 (TPRC…SAIH). Over residues 539-549 (TSRSAPNSRPN) the composition is skewed to polar residues.

The protein belongs to the tweety family. Homotetramer; disulfide-linked. Forms cis-homodimers in the presence of Ca(2+).

It localises to the cell membrane. It carries out the reaction chloride(in) = chloride(out). The catalysed reaction is L-glutamate(out) = L-glutamate(in). Functionally, may act as a calcium-independent, swelling-dependent volume-regulated anion channel (VRAC-swell) which plays a pivotal role in the process of regulatory volume decrease (RVD) in the brain through the efflux of anions like chloride and organic osmolytes like glutamate. Probable large-conductance Ca(2+)-activated chloride channel. The chain is Protein tweety homolog 3 (ttyh3b) from Danio rerio (Zebrafish).